A 245-amino-acid polypeptide reads, in one-letter code: Probable transcriptional regulatory protein pc1328 (245 aa).

The protein belongs to the TACO1 family.

It localises to the cytoplasm. The polypeptide is Probable transcriptional regulatory protein pc1328 (Protochlamydia amoebophila (strain UWE25)).